Here is a 249-residue protein sequence, read N- to C-terminus: DNA polymerase sliding clamp 1 (249 aa).

Belongs to the PCNA family. In terms of assembly, homotrimer. The subunits circularize to form a toroid; DNA passes through its center. Replication factor C (RFC) is required to load the toroid on the DNA. Interacts with TIP.

Inhibited by interaction with the PCNA inhibitor TIP. Functionally, sliding clamp subunit that acts as a moving platform for DNA processing. Responsible for tethering the catalytic subunit of DNA polymerase and other proteins to DNA during high-speed replication. This Thermococcus kodakarensis (strain ATCC BAA-918 / JCM 12380 / KOD1) (Pyrococcus kodakaraensis (strain KOD1)) protein is DNA polymerase sliding clamp 1.